The following is a 333-amino-acid chain: Taste receptor type 2 member 38 (333 aa).

The Extracellular portion of the chain corresponds to 1–17; that stretch reads MLTLTRICTVSYEVRST. A helical transmembrane segment spans residues 18–38; it reads FLFISVLEFAVGFLTNAFIFL. Topologically, residues 39-55 are cytoplasmic; sequence VNFWDVVKRQPLSNSDC. A helical transmembrane segment spans residues 56–76; the sequence is VLLCLSISRLFLHGLLFLSAI. The Extracellular segment spans residues 77-94; the sequence is QLTHFQKLSEPLNHSYHA. The chain crosses the membrane as a helical span at residues 95–115; sequence IIMLWMIANQANLWLATCLSL. The Cytoplasmic portion of the chain corresponds to 116–142; the sequence is LYCSKLIRSSHTFLICLASWVSRKICQ. The chain crosses the membrane as a helical span at residues 143 to 163; the sequence is MLLGIILCSCICTVLCVWCYF. Residues 164-190 lie on the Extracellular side of the membrane; it reads SRPHFTVTTVLFTNNNTRLNWQIKDLN. An N-linked (GlcNAc...) asparagine glycan is attached at Asn178. A helical transmembrane segment spans residues 191-211; that stretch reads LFYSFLFCYLWSVPPFLLFLV. The Cytoplasmic segment spans residues 212–251; sequence SSGMLTVSLGRHMRTMKVYTRDFRDPSLEAHIKALKSLVS. Residues 252 to 272 traverse the membrane as a helical segment; that stretch reads FFCFFVISSCAAFISVPLLIL. Residues 273–276 are Extracellular-facing; that stretch reads WRDK. Residues 277 to 297 form a helical membrane-spanning segment; the sequence is IGVMVCVGIMAACPSGHAAIL. The Cytoplasmic portion of the chain corresponds to 298–333; it reads ISGNAKLRRAVTTILLWAQSSLKVRADHKADSRTLC.

It belongs to the G-protein coupled receptor T2R family.

The protein resides in the membrane. Receptor that may play a role in the perception of bitterness and is gustducin-linked. May play a role in sensing the chemical composition of the gastrointestinal content. The activity of this receptor may stimulate alpha gustducin, mediate PLC-beta-2 activation and lead to the gating of TRPM5. The chain is Taste receptor type 2 member 38 (TAS2R38) from Hylobates klossii (Kloss's gibbon).